A 294-amino-acid polypeptide reads, in one-letter code: Zinc finger protein CONSTANS-LIKE 3 (294 aa).

The Zn(2+) site is built by C8, C11, C31, H36, C51, C54, C74, and H79. The B box-type 1; atypical zinc-finger motif lies at 8–50 (CDSCKSTAATLFCRADAAFLCGDCDGKIHTANKLASRHERVWL). Residues 51–93 (CEVCEQAPAHVTCKADAAALCVTCDRDIHSANPLSRRHERVPI) form a B box-type 2; atypical zinc finger. The CCT domain occupies 229–271 (REARVLRYREKRKNRKFEKTIRYASRKAYAEMRPRIKGRFAKR).

Belongs to the CONSTANS family.

The protein resides in the nucleus. In Arabidopsis thaliana (Mouse-ear cress), this protein is Zinc finger protein CONSTANS-LIKE 3 (COL3).